The sequence spans 401 residues: Tyrosine--tRNA ligase (401 aa).

Residues 42-51 (PTAPDLHLGH) carry the 'HIGH' region motif. Positions 226-230 (KMSKS) match the 'KMSKS' region motif. An ATP-binding site is contributed by K229. The S4 RNA-binding domain maps to 336 to 397 (IALAQLLKQI…GKRRIAKLSI (62 aa)).

The protein belongs to the class-I aminoacyl-tRNA synthetase family. TyrS type 2 subfamily. In terms of assembly, homodimer.

It localises to the cytoplasm. The catalysed reaction is tRNA(Tyr) + L-tyrosine + ATP = L-tyrosyl-tRNA(Tyr) + AMP + diphosphate + H(+). Its function is as follows. Catalyzes the attachment of tyrosine to tRNA(Tyr) in a two-step reaction: tyrosine is first activated by ATP to form Tyr-AMP and then transferred to the acceptor end of tRNA(Tyr). The polypeptide is Tyrosine--tRNA ligase (Legionella pneumophila subsp. pneumophila (strain Philadelphia 1 / ATCC 33152 / DSM 7513)).